A 120-amino-acid chain; its full sequence is Dihydroneopterin aldolase (120 aa).

Residues E20 and M114 each contribute to the substrate site.

The protein belongs to the archaeal dihydroneopterin aldolase family. Homotetramer.

It carries out the reaction 7,8-dihydroneopterin = 6-hydroxymethyl-7,8-dihydropterin + glycolaldehyde. Functionally, catalyzes the conversion of 7,8-dihydroneopterin (H2Neo) to 6-hydroxymethyl-7,8-dihydropterin (6-HMD). This is Dihydroneopterin aldolase from Picrophilus torridus (strain ATCC 700027 / DSM 9790 / JCM 10055 / NBRC 100828 / KAW 2/3).